Here is a 223-residue protein sequence, read N- to C-terminus: 2-C-methyl-D-erythritol 4-phosphate cytidylyltransferase (223 aa).

It belongs to the IspD/TarI cytidylyltransferase family. IspD subfamily.

The catalysed reaction is 2-C-methyl-D-erythritol 4-phosphate + CTP + H(+) = 4-CDP-2-C-methyl-D-erythritol + diphosphate. It functions in the pathway isoprenoid biosynthesis; isopentenyl diphosphate biosynthesis via DXP pathway; isopentenyl diphosphate from 1-deoxy-D-xylulose 5-phosphate: step 2/6. In terms of biological role, catalyzes the formation of 4-diphosphocytidyl-2-C-methyl-D-erythritol from CTP and 2-C-methyl-D-erythritol 4-phosphate (MEP). This chain is 2-C-methyl-D-erythritol 4-phosphate cytidylyltransferase, found in Prochlorococcus marinus (strain MIT 9515).